Consider the following 481-residue polypeptide: Ribosomal protein uS12 methylthiotransferase RimO (481 aa).

One can recognise an MTTase N-terminal domain in the interval 8 to 124 (MTVHLVSMGC…IAGRLRTILD (117 aa)). [4Fe-4S] cluster-binding residues include Cys17, Cys53, and Cys87. The tract at residues 148–188 (PTARAEVSVPGHGTAPDLSASVTPDSGPRATRRRLGTGPSA) is disordered. The region spanning 182 to 413 (LGTGPSAPLK…DLTDELVSQR (232 aa)) is the Radical SAM core domain. Residues Cys196, Cys200, and Cys203 each coordinate [4Fe-4S] cluster. A TRAM domain is found at 415–480 (EDRIGTRGRV…GVDLVARPAN (66 aa)).

Belongs to the methylthiotransferase family. RimO subfamily. It depends on [4Fe-4S] cluster as a cofactor.

It localises to the cytoplasm. It catalyses the reaction L-aspartate(89)-[ribosomal protein uS12]-hydrogen + (sulfur carrier)-SH + AH2 + 2 S-adenosyl-L-methionine = 3-methylsulfanyl-L-aspartate(89)-[ribosomal protein uS12]-hydrogen + (sulfur carrier)-H + 5'-deoxyadenosine + L-methionine + A + S-adenosyl-L-homocysteine + 2 H(+). Functionally, catalyzes the methylthiolation of an aspartic acid residue of ribosomal protein uS12. This is Ribosomal protein uS12 methylthiotransferase RimO from Cutibacterium acnes (strain DSM 16379 / KPA171202) (Propionibacterium acnes).